The chain runs to 377 residues: RIB43A-like with coiled-coils protein 2 (377 aa).

Residues 217 to 246 (NKNQVVELTERKRQEKQQEQEDNMTEITNL) are a coiled coil. The tract at residues 354–377 (KQMNTASSSQPTEDYFSQFNTRSR) is disordered.

This sequence belongs to the RIB43A family. As to quaternary structure, microtubule inner protein component of sperm flagellar doublet microtubules.

The protein localises to the cytoplasm. It localises to the cytoskeleton. It is found in the cilium axoneme. The protein resides in the flagellum axoneme. Functionally, microtubule inner protein (MIP) part of the dynein-decorated doublet microtubules (DMTs) in cilia axoneme, which is required for motile cilia beating. This is RIB43A-like with coiled-coils protein 2 from Mus musculus (Mouse).